The sequence spans 183 residues: Ribosome maturation factor RimM (183 aa).

Residues 104-183 (EGDYYWKDLM…TIEVDWDPGF (80 aa)) enclose the PRC barrel domain.

Belongs to the RimM family. Binds ribosomal protein uS19.

The protein localises to the cytoplasm. An accessory protein needed during the final step in the assembly of 30S ribosomal subunit, possibly for assembly of the head region. Essential for efficient processing of 16S rRNA. May be needed both before and after RbfA during the maturation of 16S rRNA. It has affinity for free ribosomal 30S subunits but not for 70S ribosomes. This Salmonella choleraesuis (strain SC-B67) protein is Ribosome maturation factor RimM.